The following is a 544-amino-acid chain: Chaperonin GroEL (544 aa).

ATP is bound by residues 29-32, 86-90, Gly-413, 476-478, and Asp-492; these read TLGP, DGTTT, and NAL.

It belongs to the chaperonin (HSP60) family. Forms a cylinder of 14 subunits composed of two heptameric rings stacked back-to-back. Interacts with the co-chaperonin GroES.

It is found in the cytoplasm. The catalysed reaction is ATP + H2O + a folded polypeptide = ADP + phosphate + an unfolded polypeptide.. In terms of biological role, together with its co-chaperonin GroES, plays an essential role in assisting protein folding. The GroEL-GroES system forms a nano-cage that allows encapsulation of the non-native substrate proteins and provides a physical environment optimized to promote and accelerate protein folding. The sequence is that of Chaperonin GroEL from Desulfitobacterium hafniense (strain DSM 10664 / DCB-2).